Consider the following 503-residue polypeptide: 11-hydroxysugiol 20-monooxygenase (503 aa).

Residues 2–22 form a helical membrane-spanning segment; sequence QVLIVASLAFLAAWLVYSRWS. Cys446 is a heme binding site.

The protein belongs to the cytochrome P450 family. The cofactor is heme. As to expression, highly expressed in roots.

Its subcellular location is the membrane. The catalysed reaction is 11-hydroxysugiol + reduced [NADPH--hemoprotein reductase] + O2 = 11,20-dihydroxysugiol + oxidized [NADPH--hemoprotein reductase] + H2O + H(+). It catalyses the reaction 11-hydroxyferruginol + reduced [NADPH--hemoprotein reductase] + O2 = 11,20-dihydroxyferruginol + oxidized [NADPH--hemoprotein reductase] + H2O + H(+). Its pathway is secondary metabolite biosynthesis; terpenoid biosynthesis. In terms of biological role, monooxygenase that oxidizes 11-hydroxysugiol to produce 11,20-dihydroxysugiol. Can oxidize 11-hydroxyferruginol to produce 11,20-dihydroxyferruginol. These products are intermediates in tanshinone biosynthesis. The chain is 11-hydroxysugiol 20-monooxygenase from Salvia miltiorrhiza (Chinese sage).